A 124-amino-acid polypeptide reads, in one-letter code: Histone H2A (124 aa).

Over residues 1-18 (MSGRGKGGKAKGKSKTRS) the composition is skewed to basic residues. The segment at 1–23 (MSGRGKGGKAKGKSKTRSSRAGL) is disordered. Ser-2 is subject to N-acetylserine. Position 2 is a phosphoserine (Ser-2). At Gln-104 the chain carries N5-methylglutamine.

This sequence belongs to the histone H2A family. In terms of assembly, the nucleosome is a histone octamer containing two molecules each of H2A, H2B, H3 and H4 assembled in one H3-H4 heterotetramer and two H2A-H2B heterodimers. The octamer wraps approximately 147 bp of DNA. Post-translationally, phosphorylation of Ser-2 directly represses transcription.

Its subcellular location is the nucleus. The protein resides in the chromosome. Its function is as follows. Core component of nucleosome. Nucleosomes wrap and compact DNA into chromatin, limiting DNA accessibility to the cellular machineries which require DNA as a template. Histones thereby play a central role in transcription regulation, DNA repair, DNA replication and chromosomal stability. DNA accessibility is regulated via a complex set of post-translational modifications of histones, also called histone code, and nucleosome remodeling. The sequence is that of Histone H2A from Platynereis dumerilii (Dumeril's clam worm).